We begin with the raw amino-acid sequence, 477 residues long: Aspartyl/glutamyl-tRNA(Asn/Gln) amidotransferase subunit B (477 aa).

The protein belongs to the GatB/GatE family. GatB subfamily. In terms of assembly, heterotrimer of A, B and C subunits.

It carries out the reaction L-glutamyl-tRNA(Gln) + L-glutamine + ATP + H2O = L-glutaminyl-tRNA(Gln) + L-glutamate + ADP + phosphate + H(+). It catalyses the reaction L-aspartyl-tRNA(Asn) + L-glutamine + ATP + H2O = L-asparaginyl-tRNA(Asn) + L-glutamate + ADP + phosphate + 2 H(+). Functionally, allows the formation of correctly charged Asn-tRNA(Asn) or Gln-tRNA(Gln) through the transamidation of misacylated Asp-tRNA(Asn) or Glu-tRNA(Gln) in organisms which lack either or both of asparaginyl-tRNA or glutaminyl-tRNA synthetases. The reaction takes place in the presence of glutamine and ATP through an activated phospho-Asp-tRNA(Asn) or phospho-Glu-tRNA(Gln). The sequence is that of Aspartyl/glutamyl-tRNA(Asn/Gln) amidotransferase subunit B from Legionella pneumophila subsp. pneumophila (strain Philadelphia 1 / ATCC 33152 / DSM 7513).